Reading from the N-terminus, the 407-residue chain is Transmembrane protein 184B (407 aa).

Residues Met-1 to Ile-24 form a disordered region. Helical transmembrane passes span Phe-40–Ile-60, Ile-84–Asn-104, Leu-121–Met-141, Leu-178–Gly-198, Val-214–Phe-234, Phe-249–Leu-269, and Val-290–Leu-310. A disordered region spans residues Thr-369 to Asn-395. Phosphoserine is present on residues Ser-388, Ser-402, and Ser-403.

Belongs to the TMEM184 family.

The protein resides in the membrane. May activate the MAP kinase signaling pathway. This Bos taurus (Bovine) protein is Transmembrane protein 184B (TMEM184B).